The sequence spans 134 residues: MGDEAKIFTLSEVSEHNQAHDCWIVINGKVYNVTKFLEDHPGGDDVLLSSTGKDATDDFEDVGHSESAREMMEQYYVGEIDPTTIPKKVKYTPPKQPHYNQDKTSEFIIKLLQFLVPLAILGLAVGIRIYTKSG.

One can recognise a Cytochrome b5 heme-binding domain in the interval 5 to 81; sequence AKIFTLSEVS…MEQYYVGEID (77 aa). Histidine 40 and histidine 64 together coordinate heme. Residues 107–127 traverse the membrane as a helical segment; sequence FIIKLLQFLVPLAILGLAVGI.

This sequence belongs to the cytochrome b5 family. In terms of assembly, interacts with CER1, FAH1, FAH2 and BI-1.

It is found in the endoplasmic reticulum membrane. In terms of biological role, membrane bound hemoprotein which function as an electron carrier for several membrane bound oxygenases, including fatty acid desaturases. This chain is Cytochrome b5 isoform B, found in Arabidopsis thaliana (Mouse-ear cress).